We begin with the raw amino-acid sequence, 714 residues long: Fatty acid oxidation complex subunit alpha (714 aa).

The interval 1–190 (MEMTSAFTLN…KLGLVDDVVP (190 aa)) is enoyl-CoA hydratase. The 3-hydroxyacyl-CoA dehydrogenase stretch occupies residues 306–714 (APLNSVGILG…FWKTTATDLQ (409 aa)).

This sequence in the N-terminal section; belongs to the enoyl-CoA hydratase/isomerase family. The protein in the central section; belongs to the 3-hydroxyacyl-CoA dehydrogenase family. As to quaternary structure, heterotetramer of two alpha chains (FadJ) and two beta chains (FadI).

It localises to the cytoplasm. It carries out the reaction a (3S)-3-hydroxyacyl-CoA = a (2E)-enoyl-CoA + H2O. The catalysed reaction is a 4-saturated-(3S)-3-hydroxyacyl-CoA = a (3E)-enoyl-CoA + H2O. The enzyme catalyses a (3S)-3-hydroxyacyl-CoA + NAD(+) = a 3-oxoacyl-CoA + NADH + H(+). It catalyses the reaction (3S)-3-hydroxybutanoyl-CoA = (3R)-3-hydroxybutanoyl-CoA. It functions in the pathway lipid metabolism; fatty acid beta-oxidation. Its function is as follows. Catalyzes the formation of a hydroxyacyl-CoA by addition of water on enoyl-CoA. Also exhibits 3-hydroxyacyl-CoA epimerase and 3-hydroxyacyl-CoA dehydrogenase activities. This is Fatty acid oxidation complex subunit alpha from Escherichia coli O8 (strain IAI1).